The chain runs to 300 residues: MDKNKMSKFAHITKVHPCFNEKIHDKVGRVHLPVAPRCNIACKFCRRSLGKEACEHRPGVALSVLKPEDVESYLNKVLKEIPNIKVVGIAGPGDSLFNKETFETLKIIDEKFPNLIKCLSTNGLLLNKYYKKLADLNVKTVTVTVNAIDPEILKEIVEWVYYDKKVHYGIEGAKILIENQIDGIKKAYDEDLIIKINTVLIPEINMNHVVDIAKELKDFVYIQNIIPLIPLYKMSHLRPPTCEELKKVREECEKYIPQFRACGQCRADAVGLIKERKILEEFFKEKNKKLNVFELKHFSH.

The Radical SAM core domain maps to 24-266; that stretch reads HDKVGRVHLP…PQFRACGQCR (243 aa). The [4Fe-4S] cluster site is built by cysteine 38, cysteine 42, and cysteine 45. S-adenosyl-L-methionine-binding residues include glycine 93, threonine 144, and isoleucine 196. 2 residues coordinate [4Fe-4S] cluster: cysteine 262 and cysteine 265.

This sequence belongs to the radical SAM superfamily. NifB family. Monomer. [4Fe-4S] cluster is required as a cofactor.

It functions in the pathway cofactor biosynthesis; Fe-Mo cofactor biosynthesis. Its function is as follows. Involved in the biosynthesis of the iron-molybdenum cofactor (FeMo-co or M-cluster) found in the dinitrogenase enzyme of the nitrogenase complex in nitrogen-fixing microorganisms. NifB catalyzes the crucial step of radical SAM-dependent carbide insertion that occurs concomitant with the insertion of a 9th sulfur and the rearrangement/coupling of two [4Fe-4S] clusters into a [8Fe-9S-C] cluster, the precursor to the M-cluster. This Methanocaldococcus jannaschii (strain ATCC 43067 / DSM 2661 / JAL-1 / JCM 10045 / NBRC 100440) (Methanococcus jannaschii) protein is FeMo cofactor biosynthesis protein NifB.